The primary structure comprises 327 residues: Cyclic AMP-responsive element-binding protein 1 (327 aa).

Disordered stretches follow at residues 1–27 (MTMESGADNQQSGDAAVTEAENQQMTV) and 94–113 (SEDSQESVDSVTDSQKRREI). The 60-residue stretch at 87-146 (QISTIAESEDSQESVDSVTDSQKRREILSRRPSYRKILNDLSSDAPGVPRIEEEKSEEET) folds into the KID domain. Position 119 is a phosphoserine; by CaMK1, CaMK2, CaMK4, PKB/AKT1 or PKB/AKT2, RPS6KA3, RPS6KA4, RPS6KA5 and SGK1 (Ser-119). Lys-122 participates in a covalent cross-link: Glycyl lysine isopeptide (Lys-Gly) (interchain with G-Cter in SUMO2). The tract at residues 126-151 (DLSSDAPGVPRIEEEKSEEETSAPAI) is disordered. Ser-128 bears the Phosphoserine; by CaMK2 mark. Ser-257 carries the phosphoserine; by HIPK2 modification. A bZIP domain is found at 269-327 (ARKREVRLMKNREAARECRRKKKEYVKCLENRVAVLENQNKTLIEELKALKDLYCHKSD). Residues 270-295 (RKREVRLMKNREAARECRRKKKEYVK) form a basic motif region. Glycyl lysine isopeptide (Lys-Gly) (interchain with G-Cter in SUMO1) cross-links involve residues Lys-271 and Lys-290. A leucine-zipper region spans residues 297-318 (LENRVAVLENQNKTLIEELKAL).

This sequence belongs to the bZIP family. In terms of assembly, interacts with PPRC1. Binds DNA as a dimer. This dimer is stabilized by magnesium ions. Interacts, through the bZIP domain, with the coactivators CRTC1/TORC1, CRTC2/TORC2 and CRTC3/TORC3. Interacts (phosphorylated form) with TOX3. When phosphorylated on Ser-119, binds CREBBP. Interacts with ARRB1. Binds to HIPK2. Interacts with SGK1. Interacts with CREBL2; regulates CREB1 phosphorylation, stability and transcriptional activity. Interacts with TSSK4; this interaction facilitates phosphorylation on Ser-119. Forms a complex with KMT2A and CREBBP. Interacts with TOX4; CREB1 is required for full induction of TOX4-dependent activity and the interaction is increased by cAMP and inhibited by insulin. In terms of processing, phosphorylation of Ser-119 allows CREBBP binding. Stimulated by phosphorylation. Phosphorylated Ser-128 can be detected in the suprachiasmatic nucleus (SCN), the amygdala, the cortex, and the hippocampus but not in the striatum nor in the cerebellum. In the SCN, phosphorylation of Ser-128 and Ser-119 are stimulated by light exposure and submitted to circadian oscillations. In the retina, only phosphorylation of Ser-119 can be detected upon light exposure. Phosphorylation of both Ser-119 and Ser-128 in the SCN regulates the activity of CREB and participates in circadian rhythm generation. Phosphorylated upon calcium influx by CaMK4 and CaMK2 on Ser-119. CaMK4 is much more potent than CAMK2 in activating CREB. Phosphorylated by CaMK2 on Ser-128. Phosphorylation of Ser-128 blocks CREB-mediated transcription even when Ser-119 is phosphorylated. Phosphorylated by CaMK1. Phosphorylation of Ser-271 by HIPK2 in response to genotoxic stress promotes CREB1 activity, facilitating the recruitment of the coactivator CBP. Phosphorylated at Ser-119 by RPS6KA3, RPS6KA4 and RPS6KA5 in response to mitogenic or stress stimuli. CREBL2 positively regulates phosphorylation at Ser-119 thereby stimulating CREB1 transcriptional activity. In liver, phosphorylation is induced by fasting or glucagon in a circadian fashion. Phosphorylated by TSSK4 on Ser-119. Post-translationally, sumoylated with SUMO1. Sumoylation on Lys-290, but not on Lys-271, is required for nuclear localization of this protein. Sumoylation is enhanced under hypoxia, promoting nuclear localization and stabilization. As to expression, expressed in the heart (at protein level).

It localises to the nucleus. In terms of biological role, phosphorylation-dependent transcription factor that stimulates transcription upon binding to the DNA cAMP response element (CRE), a sequence present in many viral and cellular promoters. Transcription activation is enhanced by the TORC coactivators which act independently of Ser-119 phosphorylation. Involved in different cellular processes including the synchronization of circadian rhythmicity and the differentiation of adipose cells. Regulates the expression of apoptotic and inflammatory response factors in cardiomyocytes in response to ERFE-mediated activation of AKT signaling. The chain is Cyclic AMP-responsive element-binding protein 1 (Creb1) from Mus musculus (Mouse).